A 243-amino-acid chain; its full sequence is 2-C-methyl-D-erythritol 4-phosphate cytidylyltransferase (243 aa).

Belongs to the IspD/TarI cytidylyltransferase family. IspD subfamily.

It carries out the reaction 2-C-methyl-D-erythritol 4-phosphate + CTP + H(+) = 4-CDP-2-C-methyl-D-erythritol + diphosphate. It functions in the pathway isoprenoid biosynthesis; isopentenyl diphosphate biosynthesis via DXP pathway; isopentenyl diphosphate from 1-deoxy-D-xylulose 5-phosphate: step 2/6. Catalyzes the formation of 4-diphosphocytidyl-2-C-methyl-D-erythritol from CTP and 2-C-methyl-D-erythritol 4-phosphate (MEP). This is 2-C-methyl-D-erythritol 4-phosphate cytidylyltransferase from Pelodictyon phaeoclathratiforme (strain DSM 5477 / BU-1).